Reading from the N-terminus, the 221-residue chain is Max dimerization protein 1 (221 aa).

A Nuclear localization signal motif is present at residues 21–49 (RREREAEHGYASMLPYNSKERDGLKRKSK). 2 disordered regions span residues 28-67 (HGYASMLPYNSKERDGLKRKSKSKKSSNSRSTHNEMEKNR) and 176-202 (DWSSSSSSVSDLDERGSMQSICSDEGY). The bHLH domain occupies 55-107 (NSRSTHNEMEKNRRAHLRLCLEKLKILVPLGPESNRHTTLSLLTRAKSHIKKL). Polar residues predominate over residues 192-202 (SMQSICSDEGY).

Efficient DNA binding requires dimerization with another bHLH protein. Binds DNA as a heterodimer with MAX.

It localises to the nucleus. Functionally, transcriptional repressor. MAD binds with MAX to form a sequence-specific DNA-binding protein complex which recognizes the core sequence 5'-CAC[GA]TG-3'. MAD thus antagonizes MYC transcriptional activity by competing for MAX. The chain is Max dimerization protein 1 (mxd1) from Xenopus tropicalis (Western clawed frog).